A 275-amino-acid chain; its full sequence is Esterase AAEL000016 (275 aa).

The interval 1 to 21 (MMANETAAKSTKSSPTPAVEP) is disordered. Positions 7-16 (AAKSTKSSPT) are enriched in polar residues. Residues serine 129, aspartate 187, and histidine 214 each act as charge relay system in the active site. The tract at residues 253 to 275 (LVDDSGPAGNGVHDDDDDDDDSD) is disordered. The span at 266–275 (DDDDDDDDSD) shows a compositional bias: acidic residues.

This sequence belongs to the LovG family.

This Aedes aegypti (Yellowfever mosquito) protein is Esterase AAEL000016.